A 190-amino-acid polypeptide reads, in one-letter code: Adenylate kinase (190 aa).

An ATP-binding site is contributed by 11-16; that stretch reads GAGKGT. Positions 31–60 are NMP; sequence STGDIFRFNLKNDTELGKQARVFMDNGELV. AMP is bound by residues Thr-32, Arg-37, 58–60, 86–89, and Gln-93; these read ELV and GYPR. Positions 127-137 are LID; that stretch reads ERGKTSGRADD. Arg-128 provides a ligand contact to ATP. AMP is bound by residues Arg-134 and Arg-146. Gly-174 contacts ATP.

Belongs to the adenylate kinase family. In terms of assembly, monomer.

Its subcellular location is the cytoplasm. It catalyses the reaction AMP + ATP = 2 ADP. It participates in purine metabolism; AMP biosynthesis via salvage pathway; AMP from ADP: step 1/1. Catalyzes the reversible transfer of the terminal phosphate group between ATP and AMP. Plays an important role in cellular energy homeostasis and in adenine nucleotide metabolism. In Flavobacterium johnsoniae (strain ATCC 17061 / DSM 2064 / JCM 8514 / BCRC 14874 / CCUG 350202 / NBRC 14942 / NCIMB 11054 / UW101) (Cytophaga johnsonae), this protein is Adenylate kinase.